A 397-amino-acid chain; its full sequence is 3-ketoacyl-CoA thiolase, mitochondrial (397 aa).

A mitochondrion; not cleaved-targeting transit peptide spans 1-16 (MALLRGVFIVAAKRTP). Lysine 25 is modified (N6-acetyllysine; alternate). The residue at position 25 (lysine 25) is an N6-succinyllysine; alternate. Cysteine 92 (acyl-thioester intermediate) is an active-site residue. Threonine 119 carries the post-translational modification Phosphothreonine. Serine 121 bears the Phosphoserine mark. Tyrosine 127 carries the phosphotyrosine modification. At threonine 136 the chain carries Phosphothreonine. An N6-acetyllysine; alternate modification is found at lysine 137. N6-succinyllysine; alternate is present on lysine 137. A Phosphoserine modification is found at serine 140. Residues lysine 143, lysine 171, lysine 191, and lysine 209 each carry the N6-acetyllysine; alternate modification. N6-succinyllysine; alternate is present on residues lysine 143, lysine 171, lysine 191, and lysine 209. Lysine 212 and lysine 214 each carry N6-succinyllysine. Positions 224 and 227 each coordinate CoA. Lysine 234 carries the N6-acetyllysine; alternate modification. Lysine 234 is modified (N6-succinyllysine; alternate). Position 240 is an N6-succinyllysine (lysine 240). At lysine 241 the chain carries N6-acetyllysine. Serine 251 provides a ligand contact to CoA. 2 positions are modified to N6-acetyllysine: lysine 269 and lysine 270. Lysine 305 carries the post-translational modification N6-acetyllysine; alternate. N6-succinyllysine; alternate is present on lysine 305. The residue at position 310 (serine 310) is a Phosphoserine. Lysine 312 carries the post-translational modification N6-acetyllysine; alternate. Lysine 312 is modified (N6-succinyllysine; alternate). Serine 333 bears the Phosphoserine mark. An N6-acetyllysine mark is found at lysine 340 and lysine 375. Catalysis depends on cysteine 382, which acts as the Proton donor/acceptor.

It belongs to the thiolase-like superfamily. Thiolase family. In terms of assembly, homotetramer. Interacts with BNIP3.

It is found in the mitochondrion. It carries out the reaction an acyl-CoA + acetyl-CoA = a 3-oxoacyl-CoA + CoA. The catalysed reaction is 2 acetyl-CoA = acetoacetyl-CoA + CoA. The enzyme catalyses acetyl-CoA + H2O = acetate + CoA + H(+). It catalyses the reaction propanoyl-CoA + H2O = propanoate + CoA + H(+). It carries out the reaction butanoyl-CoA + H2O = butanoate + CoA + H(+). The catalysed reaction is hexanoyl-CoA + H2O = hexanoate + CoA + H(+). The enzyme catalyses octanoyl-CoA + H2O = octanoate + CoA + H(+). It catalyses the reaction decanoyl-CoA + H2O = decanoate + CoA + H(+). It carries out the reaction dodecanoyl-CoA + H2O = dodecanoate + CoA + H(+). The catalysed reaction is tetradecanoyl-CoA + H2O = tetradecanoate + CoA + H(+). The enzyme catalyses hexadecanoyl-CoA + H2O = hexadecanoate + CoA + H(+). The protein operates within lipid metabolism; fatty acid beta-oxidation. In terms of biological role, in the production of energy from fats, this is one of the enzymes that catalyzes the last step of the mitochondrial beta-oxidation pathway, an aerobic process breaking down fatty acids into acetyl-CoA. Using free coenzyme A/CoA, catalyzes the thiolytic cleavage of medium- to long-chain unbranched 3-oxoacyl-CoAs into acetyl-CoA and a fatty acyl-CoA shortened by two carbon atoms. Also catalyzes the condensation of two acetyl-CoA molecules into acetoacetyl-CoA and could be involved in the production of ketone bodies. Also displays hydrolase activity on various fatty acyl-CoAs. Thereby, could be responsible for the production of acetate in a side reaction to beta-oxidation. Abolishes BNIP3-mediated apoptosis and mitochondrial damage. The sequence is that of 3-ketoacyl-CoA thiolase, mitochondrial (ACAA2) from Bos taurus (Bovine).